A 240-amino-acid polypeptide reads, in one-letter code: UDP-2,3-diacylglucosamine hydrolase (240 aa).

Mn(2+)-binding residues include aspartate 8, histidine 10, aspartate 41, asparagine 79, and histidine 114. 79–80 (NR) lines the substrate pocket. Substrate contacts are provided by aspartate 122, serine 160, asparagine 164, lysine 167, and histidine 195. Positions 195 and 197 each coordinate Mn(2+).

It belongs to the LpxH family. Mn(2+) serves as cofactor.

Its subcellular location is the cell inner membrane. The enzyme catalyses UDP-2-N,3-O-bis[(3R)-3-hydroxytetradecanoyl]-alpha-D-glucosamine + H2O = 2-N,3-O-bis[(3R)-3-hydroxytetradecanoyl]-alpha-D-glucosaminyl 1-phosphate + UMP + 2 H(+). It participates in glycolipid biosynthesis; lipid IV(A) biosynthesis; lipid IV(A) from (3R)-3-hydroxytetradecanoyl-[acyl-carrier-protein] and UDP-N-acetyl-alpha-D-glucosamine: step 4/6. In terms of biological role, hydrolyzes the pyrophosphate bond of UDP-2,3-diacylglucosamine to yield 2,3-diacylglucosamine 1-phosphate (lipid X) and UMP by catalyzing the attack of water at the alpha-P atom. Involved in the biosynthesis of lipid A, a phosphorylated glycolipid that anchors the lipopolysaccharide to the outer membrane of the cell. The sequence is that of UDP-2,3-diacylglucosamine hydrolase from Salmonella dublin (strain CT_02021853).